The sequence spans 144 residues: Prefoldin subunit alpha (144 aa).

Belongs to the prefoldin alpha subunit family. As to quaternary structure, heterohexamer of two alpha and four beta subunits.

Its subcellular location is the cytoplasm. Functionally, molecular chaperone capable of stabilizing a range of proteins. Seems to fulfill an ATP-independent, HSP70-like function in archaeal de novo protein folding. The sequence is that of Prefoldin subunit alpha from Methanococcus aeolicus (strain ATCC BAA-1280 / DSM 17508 / OCM 812 / Nankai-3).